The following is a 78-amino-acid chain: U-scoloptoxin(04)-Er1b (78 aa).

An N-terminal signal peptide occupies residues 1 to 24 (MTRHLIFAAVLLVCLFVCWNAVGA). Positions 25-28 (QDAR) are excised as a propeptide.

The protein belongs to the scoloptoxin-04 family. Post-translationally, contains 2 disulfide bonds. In terms of tissue distribution, expressed by the venom gland.

It is found in the secreted. The chain is U-scoloptoxin(04)-Er1b from Ethmostigmus rubripes (Giant centipede).